We begin with the raw amino-acid sequence, 205 residues long: Phosphoheptose isomerase (205 aa).

Residues 38-200 (LAVRLALGSK…LFEAVGELEP (163 aa)) enclose the SIS domain. 53–55 (NGG) contacts substrate. 2 residues coordinate Zn(2+): His62 and Glu66. Substrate contacts are provided by residues Glu66, 95–96 (ND), 121–123 (STS), Ser126, and Gln173. Residues Gln173 and His181 each coordinate Zn(2+).

Belongs to the SIS family. GmhA subfamily. As to quaternary structure, homotetramer. The cofactor is Zn(2+).

The protein localises to the cytoplasm. The enzyme catalyses 2 D-sedoheptulose 7-phosphate = D-glycero-alpha-D-manno-heptose 7-phosphate + D-glycero-beta-D-manno-heptose 7-phosphate. The protein operates within carbohydrate biosynthesis; D-glycero-D-manno-heptose 7-phosphate biosynthesis; D-glycero-alpha-D-manno-heptose 7-phosphate and D-glycero-beta-D-manno-heptose 7-phosphate from sedoheptulose 7-phosphate: step 1/1. In terms of biological role, catalyzes the isomerization of sedoheptulose 7-phosphate in D-glycero-D-manno-heptose 7-phosphate. This Maridesulfovibrio salexigens (strain ATCC 14822 / DSM 2638 / NCIMB 8403 / VKM B-1763) (Desulfovibrio salexigens) protein is Phosphoheptose isomerase.